The chain runs to 497 residues: MSFITKAACVGGGVIGGAWVARFALAGIDVKIFDPHPEAERIIGEVMANAERAYAMLTMAPLPPKGKLTFCKSIEEAVEGADWIQESVPERLELKRGVITKIDAAARPDALIGSSTSGLLPSDLQSEMHHPERMFVAHPYNPVYLLPLVELVGGKKTSKATIERAMQGVEQIGMKGVVIAKEIEAFVGDRLLEALWREALWLIQDDICHTETLDNVMRYSFGMRWAQMGLFETYRIAGGEAGMRHFLAQFGPCLKWPWTKFTDVVDLDDALVEKIGAQSDAQAAGRSIRELERIRDENLVGIMHALKSGNGGEGWGAGKLLADFEAKLWANARKPEADLGDVKPLRILDTKVSAAWVDYNGHMTEHRYLQVFGDTSDGVLRLIGVDLDYVRDGHSYYTVETHIRNLGDEASGEALYSTCQILSSDEKRLHIFSTIYNAATNEAVATAEQMMLHVDSKAGKAVAAPEAVLSKLRAITEAHAQLQTPDGAGRFVGQKRA.

The segment at 1–335 is L-carnitine dehydrogenase; it reads MSFITKAACV…AKLWANARKP (335 aa). An NAD(+)-binding site is contributed by 11 to 16; sequence GGGVIG. The interval 330-335 is important for dehydrogenase activity; it reads ANARKP. The segment at 336–497 is betainyl-CoA thioesterase; it reads EADLGDVKPL…AGRFVGQKRA (162 aa).

It in the N-terminal section; belongs to the 3-hydroxyacyl-CoA dehydrogenase family. L-carnitine dehydrogenase subfamily. This sequence in the C-terminal section; belongs to the betainyl-CoA thioesterase family. In terms of assembly, homodimer.

The protein resides in the cytoplasm. The catalysed reaction is carnitine + NAD(+) = 3-dehydrocarnitine + NADH + H(+). It catalyses the reaction N,N,N-trimethylglycyl-CoA + H2O = glycine betaine + CoA + H(+). Its pathway is amine and polyamine metabolism; carnitine metabolism. Catalyzes the NAD(+)-dependent oxidation of L-carnitine to 3-dehydrocarnitine. Probably also catalyzes the cleavage of betainyl-CoA (N,N,N-trimethylglycyl-CoA) into glycine betaine and coenzyme A. Despite a high similarity to 3-hydroxyacyl-CoA dehydrogenases, cannot dehydrogenate 3-hydroxybutylate and 3-hydroxybutyl-CoA. Is probably involved in a L-carnitine degradation pathway that allows Rhizobium sp. YS-240 to grow on L-carnitine as the sole source of carbon and nitrogen. The polypeptide is L-carnitine dehydrogenase/betainyl-CoA thioesterase (Rhizobium sp).